The following is a 463-amino-acid chain: Bifunctional protein HldE (463 aa).

The interval 1 to 311 (MKQILVVGDL…EEIALILNQT (311 aa)) is ribokinase. An ATP-binding site is contributed by 191–194 (NRIE). The active site involves Asp260. A cytidylyltransferase region spans residues 334–463 (FTNGCFDILH…IERIKRTCND (130 aa)).

It in the N-terminal section; belongs to the carbohydrate kinase PfkB family. This sequence in the C-terminal section; belongs to the cytidylyltransferase family. Homodimer.

It catalyses the reaction D-glycero-beta-D-manno-heptose 7-phosphate + ATP = D-glycero-beta-D-manno-heptose 1,7-bisphosphate + ADP + H(+). The catalysed reaction is D-glycero-beta-D-manno-heptose 1-phosphate + ATP + H(+) = ADP-D-glycero-beta-D-manno-heptose + diphosphate. Its pathway is nucleotide-sugar biosynthesis; ADP-L-glycero-beta-D-manno-heptose biosynthesis; ADP-L-glycero-beta-D-manno-heptose from D-glycero-beta-D-manno-heptose 7-phosphate: step 1/4. It participates in nucleotide-sugar biosynthesis; ADP-L-glycero-beta-D-manno-heptose biosynthesis; ADP-L-glycero-beta-D-manno-heptose from D-glycero-beta-D-manno-heptose 7-phosphate: step 3/4. Functionally, catalyzes the phosphorylation of D-glycero-D-manno-heptose 7-phosphate at the C-1 position to selectively form D-glycero-beta-D-manno-heptose-1,7-bisphosphate. Its function is as follows. Catalyzes the ADP transfer from ATP to D-glycero-beta-D-manno-heptose 1-phosphate, yielding ADP-D-glycero-beta-D-manno-heptose. The sequence is that of Bifunctional protein HldE from Helicobacter pylori (strain Shi470).